Consider the following 217-residue polypeptide: 8-oxoguanine DNA glycosylase/AP lyase (217 aa).

Active-site residues include Lys-138 and Asp-157.

Belongs to the type-2 OGG1 family.

The enzyme catalyses 2'-deoxyribonucleotide-(2'-deoxyribose 5'-phosphate)-2'-deoxyribonucleotide-DNA = a 3'-end 2'-deoxyribonucleotide-(2,3-dehydro-2,3-deoxyribose 5'-phosphate)-DNA + a 5'-end 5'-phospho-2'-deoxyribonucleoside-DNA + H(+). In terms of biological role, catalyzes the excision of an oxidatively damaged form of guanine (7,8-dihydro-8-oxoguanine = 8-oxoG) from DNA. Also cleaves the DNA backbone at apurinic/apyrimidinic sites (AP sites). This is 8-oxoguanine DNA glycosylase/AP lyase from Fusobacterium nucleatum subsp. nucleatum (strain ATCC 25586 / DSM 15643 / BCRC 10681 / CIP 101130 / JCM 8532 / KCTC 2640 / LMG 13131 / VPI 4355).